The chain runs to 295 residues: Undecaprenyl-diphosphatase (295 aa).

7 consecutive transmembrane segments (helical) span residues 12–34, 50–70, 95–115, 120–140, 209–229, 243–263, and 272–292; these read IAIA…HAVV, FLPF…LYFW, IFML…LLEH, LFES…LLLF, AHFS…LEVP, TAAL…AFLM, and WALK…LAWL.

It belongs to the UppP family.

It is found in the cell inner membrane. It catalyses the reaction di-trans,octa-cis-undecaprenyl diphosphate + H2O = di-trans,octa-cis-undecaprenyl phosphate + phosphate + H(+). Functionally, catalyzes the dephosphorylation of undecaprenyl diphosphate (UPP). Confers resistance to bacitracin. The protein is Undecaprenyl-diphosphatase of Granulibacter bethesdensis (strain ATCC BAA-1260 / CGDNIH1).